The primary structure comprises 454 residues: tRNA modification GTPase MnmE (454 aa).

Arg-23, Glu-80, and Lys-120 together coordinate (6S)-5-formyl-5,6,7,8-tetrahydrofolate. The region spanning 216-377 is the TrmE-type G domain; the sequence is GMKVVIAGRP…LRNHLKQSMG (162 aa). Asn-226 is a K(+) binding site. GTP contacts are provided by residues 226-231, 245-251, 270-273, 335-338, and 358-360; these read NAGKSS, TDIAGTT, DTAG, NKAD, and SAR. Ser-230 is a Mg(2+) binding site. 3 residues coordinate K(+): Thr-245, Ile-247, and Thr-250. Thr-251 contributes to the Mg(2+) binding site. A (6S)-5-formyl-5,6,7,8-tetrahydrofolate-binding site is contributed by Lys-454.

It belongs to the TRAFAC class TrmE-Era-EngA-EngB-Septin-like GTPase superfamily. TrmE GTPase family. Homodimer. Heterotetramer of two MnmE and two MnmG subunits. It depends on K(+) as a cofactor.

It localises to the cytoplasm. Its function is as follows. Exhibits a very high intrinsic GTPase hydrolysis rate. Involved in the addition of a carboxymethylaminomethyl (cmnm) group at the wobble position (U34) of certain tRNAs, forming tRNA-cmnm(5)s(2)U34. This is tRNA modification GTPase MnmE from Shigella sonnei (strain Ss046).